Here is a 332-residue protein sequence, read N- to C-terminus: tRNA-dihydrouridine(20/20a) synthase (332 aa).

Residues 19–21 and Q71 each bind FMN; that span reads PML. Catalysis depends on C101, which acts as the Proton donor. Residues K140, H173, 213–215, and 235–236 each bind FMN; these read NGG and GR.

The protein belongs to the Dus family. DusA subfamily. Requires FMN as cofactor.

It carries out the reaction 5,6-dihydrouridine(20) in tRNA + NADP(+) = uridine(20) in tRNA + NADPH + H(+). It catalyses the reaction 5,6-dihydrouridine(20) in tRNA + NAD(+) = uridine(20) in tRNA + NADH + H(+). The enzyme catalyses 5,6-dihydrouridine(20a) in tRNA + NADP(+) = uridine(20a) in tRNA + NADPH + H(+). The catalysed reaction is 5,6-dihydrouridine(20a) in tRNA + NAD(+) = uridine(20a) in tRNA + NADH + H(+). Its function is as follows. Catalyzes the synthesis of 5,6-dihydrouridine (D), a modified base found in the D-loop of most tRNAs, via the reduction of the C5-C6 double bond in target uridines. Specifically modifies U20 and U20a in tRNAs. This is tRNA-dihydrouridine(20/20a) synthase from Salmonella typhimurium (strain LT2 / SGSC1412 / ATCC 700720).